Consider the following 265-residue polypeptide: NAD kinase 1 (265 aa).

D45 serves as the catalytic Proton acceptor. NAD(+) contacts are provided by residues 45 to 46 (DG), 122 to 123 (NE), R148, D150, and A185.

The protein belongs to the NAD kinase family. Requires a divalent metal cation as cofactor.

It localises to the cytoplasm. It carries out the reaction NAD(+) + ATP = ADP + NADP(+) + H(+). Functionally, involved in the regulation of the intracellular balance of NAD and NADP, and is a key enzyme in the biosynthesis of NADP. Catalyzes specifically the phosphorylation on 2'-hydroxyl of the adenosine moiety of NAD to yield NADP. In Bacillus anthracis, this protein is NAD kinase 1.